The sequence spans 93 residues: Putative pterin-4-alpha-carbinolamine dehydratase (93 aa).

The protein belongs to the pterin-4-alpha-carbinolamine dehydratase family.

It catalyses the reaction (4aS,6R)-4a-hydroxy-L-erythro-5,6,7,8-tetrahydrobiopterin = (6R)-L-erythro-6,7-dihydrobiopterin + H2O. This is Putative pterin-4-alpha-carbinolamine dehydratase from Trichormus variabilis (strain ATCC 29413 / PCC 7937) (Anabaena variabilis).